Here is a 530-residue protein sequence, read N- to C-terminus: UPF0422 protein lpp3030 (530 aa).

Residues 1–19 (MKFKKIILALACLSSPLYA) form the signal peptide. Residues 20-66 (DQDQQLKSEIQRLQHQAEDLQAQLNRLQKQLANHKSSQQKHEQQAAA) adopt a coiled-coil conformation. The interval 50-81 (LANHKSSQQKHEQQAAAKPAEPKSKPTTKSGA) is disordered. Residues 63-79 (QAAAKPAEPKSKPTTKS) are compositionally biased toward low complexity.

The protein belongs to the UPF0422 family.

The protein is UPF0422 protein lpp3030 of Legionella pneumophila (strain Paris).